We begin with the raw amino-acid sequence, 591 residues long: Aspartate--tRNA(Asp/Asn) ligase (591 aa).

E174 contributes to the L-aspartate binding site. The aspartate stretch occupies residues 198–201 (QLFK). L-aspartate is bound at residue R220. ATP is bound by residues 220-222 (RDE) and Q229. Position 450 (H450) interacts with L-aspartate. Position 483 (E483) interacts with ATP. R490 is a binding site for L-aspartate. An ATP-binding site is contributed by 535-538 (GLDR).

The protein belongs to the class-II aminoacyl-tRNA synthetase family. Type 1 subfamily. As to quaternary structure, homodimer.

It localises to the cytoplasm. The enzyme catalyses tRNA(Asx) + L-aspartate + ATP = L-aspartyl-tRNA(Asx) + AMP + diphosphate. Aspartyl-tRNA synthetase with relaxed tRNA specificity since it is able to aspartylate not only its cognate tRNA(Asp) but also tRNA(Asn). Reaction proceeds in two steps: L-aspartate is first activated by ATP to form Asp-AMP and then transferred to the acceptor end of tRNA(Asp/Asn). The protein is Aspartate--tRNA(Asp/Asn) ligase of Azotobacter vinelandii (strain DJ / ATCC BAA-1303).